The sequence spans 103 residues: Large ribosomal subunit protein bL21 (103 aa).

It belongs to the bacterial ribosomal protein bL21 family. As to quaternary structure, part of the 50S ribosomal subunit. Contacts protein L20.

Functionally, this protein binds to 23S rRNA in the presence of protein L20. The chain is Large ribosomal subunit protein bL21 from Bordetella parapertussis (strain 12822 / ATCC BAA-587 / NCTC 13253).